A 1312-amino-acid chain; its full sequence is Angiotensin-converting enzyme (1312 aa).

Residues 1 to 34 (MGAASGQRGRWPLSPPLLMLSLLVLLLQPSPAPA) form the signal peptide. The Extracellular segment spans residues 35-1264 (LDPGLQPGNF…LEPQQARVGQ (1230 aa)). 2 Peptidase M2 domains span residues 45 to 629 (SPDE…LGWP) and 648 to 1227 (ETDE…LGWP). Residues asparagine 59, asparagine 79, asparagine 116, asparagine 151, and asparagine 165 are each glycosylated (N-linked (GlcNAc...) asparagine). Cysteine 162 and cysteine 170 are joined by a disulfide. Residue tyrosine 236 coordinates chloride. Asparagine 323 carries an N-linked (GlcNAc...) asparagine glycan. Cysteines 364 and 382 form a disulfide. Zn(2+) is bound at residue histidine 395. The active-site Proton acceptor 1 is the glutamate 396. Zn(2+) is bound by residues histidine 399 and glutamate 423. Asparagine 514 is a glycosylation site (N-linked (GlcNAc...) asparagine). Histidine 525 (proton donor 1) is an active-site residue. Arginine 534 is a chloride binding site. A disulfide bridge links cysteine 550 with cysteine 562. A glycan (N-linked (GlcNAc...) asparagine) is linked at asparagine 682. Asparagine 700 and asparagine 719 each carry an N-linked (GlcNAc...) (complex) asparagine glycan. Cysteine 762 and cysteine 768 are oxidised to a cystine. An N-linked (GlcNAc...) asparagine glycan is attached at asparagine 765. Residues arginine 796 and tyrosine 834 each coordinate chloride. An N-linked (GlcNAc...) asparagine glycan is attached at asparagine 947. Cysteine 962 and cysteine 980 are joined by a disulfide. Residue histidine 993 participates in Zn(2+) binding. The active-site Proton acceptor 2 is the glutamate 994. Histidine 997 and glutamate 1021 together coordinate Zn(2+). Chloride contacts are provided by tryptophan 1095 and arginine 1099. Histidine 1123 acts as the Proton donor 2 in catalysis. Arginine 1132 is a binding site for chloride. A disulfide bridge connects residues cysteine 1148 and cysteine 1160. Asparagine 1196 is a glycosylation site (N-linked (GlcNAc...) asparagine). Residues 1220–1261 (HGETLGWPEYNWAPNTARAEGSTAESNRVNFLGLYLEPQQAR) are juxtamembrane stalk. Residues 1265 to 1281 (WVLLFLGVALLVATVGL) form a helical membrane-spanning segment. At 1282-1312 (AHRLYNIRNHHSLRRPHRGPQFGSEVELRHS) the chain is on the cytoplasmic side. At serine 1305 the chain carries Phosphoserine.

Belongs to the peptidase M2 family. Monomer and homodimer; homodimerizes following binding to an inhibitor. Interacts with calmodulin (CALM1, CALM2 or CALM3); interaction takes place in the cytoplasmic region and regulates phosphorylation and proteolytic cleavage. Requires Zn(2+) as cofactor. The cofactor is chloride. Post-translationally, produced following proteolytic cleavage by secretase enzymes that cleave the transmembrane form in the juxtamembrane stalk region upstream of the transmembrane region. Cleavage can take place at different sites of the juxtamembrane stalk region. In terms of processing, phosphorylated by CK2 on Ser-1305; which allows membrane retention. Phosphorylated on tyrosine residues on its extracellular part, promoting cleavage by secretase enzymes and formation of the soluble form (Angiotensin-converting enzyme, soluble form). In terms of tissue distribution, highly expressed in kidney and lung; not expressed in the liver. In the brain, expressed in the cerebral cortex, hippocampus, cerebellum and basal ganglia/brainstem. Highly expressed in dopamine receptor DRD1-expressing neurons in the dorsal striatum and the nucleus accumbens of the brain. Specifically expressed in spermatocytes, adult testis.

Its subcellular location is the cell membrane. The protein resides in the cytoplasm. The protein localises to the secreted. It catalyses the reaction Release of a C-terminal dipeptide, oligopeptide-|-Xaa-Yaa, when Xaa is not Pro, and Yaa is neither Asp nor Glu. Thus, conversion of angiotensin I to angiotensin II, with increase in vasoconstrictor activity, but no action on angiotensin II.. It carries out the reaction angiotensin I + H2O = L-histidyl-L-leucine + angiotensin II. The enzyme catalyses bradykinin + H2O = L-Phe-L-Arg + bradykinin(1-7). The catalysed reaction is substance P + H2O = substance P(1-9) + L-Leu-L-Met-NH2. It catalyses the reaction substance P + H2O = substance P(1-8) + Gly-L-Leu-L-Met-NH2. It carries out the reaction substance P + H2O = L-Phe-L-Phe-Gly-L-Leu-L-Met-NH2 + substance P(1-6). The enzyme catalyses neurotensin + H2O = neurotensin(1-11) + L-isoleucyl-L-leucine. The catalysed reaction is goralatide + H2O = N-acetyl-L-seryl-L-aspartate + L-lysyl-L-proline. It catalyses the reaction Met-enkephalin + H2O = L-phenylalanyl-L-methionine + L-tyrosylglycylglycine. It carries out the reaction Leu-enkephalin + H2O = L-tyrosylglycylglycine + L-phenylalanyl-L-leucine. The enzyme catalyses Met-enkephalin-Arg-Phe + H2O = L-arginyl-L-phenylalanine + Met-enkephalin. Its activity is regulated as follows. The dipeptidyl carboxypeptidase activity is specifically inhibited by lisinopril, captopril and enalaprilat. The N-terminal catalytic domain, but not the C-terminal catalytic domain, is specifically inhibited by the phosphinic peptide RXP 407. With respect to regulation, the putative GPIase activity is nearly insensitive to captopril. Dipeptidyl carboxypeptidase that removes dipeptides from the C-terminus of a variety of circulating hormones, such as angiotensin I, bradykinin or enkephalins, thereby playing a key role in the regulation of blood pressure, electrolyte homeostasis or synaptic plasticity. Composed of two similar catalytic domains, each possessing a functional active site, with different selectivity for substrates. Plays a major role in the angiotensin-renin system that regulates blood pressure and sodium retention by the kidney by converting angiotensin I to angiotensin II, resulting in an increase of the vasoconstrictor activity of angiotensin. Also able to inactivate bradykinin, a potent vasodilator, and therefore enhance the blood pressure response. Acts as a regulator of synaptic transmission by mediating cleavage of neuropeptide hormones, such as substance P, neurotensin or enkephalins. Catalyzes degradation of different enkephalin neuropeptides (Met-enkephalin, Leu-enkephalin, Met-enkephalin-Arg-Phe and possibly Met-enkephalin-Arg-Gly-Leu). Acts as a regulator of synaptic plasticity in the nucleus accumbens of the brain by mediating cleavage of Met-enkephalin-Arg-Phe, a strong ligand of Mu-type opioid receptor OPRM1, into Met-enkephalin. Met-enkephalin-Arg-Phe cleavage by ACE decreases activation of OPRM1, leading to long-term synaptic potentiation of glutamate release. Also acts as a regulator of hematopoietic stem cell differentiation by mediating degradation of hemoregulatory peptide N-acetyl-SDKP (AcSDKP). Acts as a regulator of cannabinoid signaling pathway by mediating degradation of hemopressin, an antagonist peptide of the cannabinoid receptor CNR1. Involved in amyloid-beta metabolism by catalyzing degradation of Amyloid-beta protein 40 and Amyloid-beta protein 42 peptides, thereby preventing plaque formation. Catalyzes cleavage of cholecystokinin (maturation of Cholecystokinin-8 and Cholecystokinin-5) and Gonadoliberin-1 (both maturation and degradation) hormones. Degradation of hemoregulatory peptide N-acetyl-SDKP (AcSDKP) and amyloid-beta proteins is mediated by the N-terminal catalytic domain, while angiotensin I and cholecystokinin cleavage is mediated by the C-terminal catalytic region. In terms of biological role, soluble form that is released in blood plasma and other body fluids following proteolytic cleavage in the juxtamembrane stalk region. Its function is as follows. Isoform produced by alternative promoter usage that is specifically expressed in spermatocytes and adult testis, and which is required for male fertility. In contrast to somatic isoforms, only contains one catalytic domain. Acts as a dipeptidyl carboxypeptidase that removes dipeptides from the C-terminus of substrates. The identity of substrates that are needed for male fertility is unknown. Isoform Testis-specific and isoform Somatic have distinct activities and cannot completely compensate for the loss of the other when expressed in somatic tissues or testis. May also have a glycosidase activity which releases GPI-anchored proteins from the membrane by cleaving the mannose linkage in the GPI moiety. The GPIase activity was reported to be essential for the egg-binding ability of the sperm. This activity is however unclear and has been challenged by other groups, suggesting that it may be indirect. The protein is Angiotensin-converting enzyme of Mus musculus (Mouse).